The chain runs to 438 residues: Phosphatidylcholine-sterol acyltransferase (438 aa).

An N-terminal signal peptide occupies residues 1–24 (MGLPGSPWQRVLLLLGLLLPPATP). Residue asparagine 44 is glycosylated (N-linked (GlcNAc...) asparagine). Cysteine 74 and cysteine 98 are joined by a disulfide. Asparagine 108 carries an N-linked (GlcNAc...) asparagine glycan. Serine 205 (nucleophile) is an active-site residue. Asparagine 296 is a glycosylation site (N-linked (GlcNAc...) asparagine). An intrachain disulfide couples cysteine 337 to cysteine 380. Aspartate 369 serves as the catalytic Charge relay system. Asparagine 397 carries N-linked (GlcNAc...) asparagine glycosylation. The active-site Charge relay system is histidine 401. N-linked (GlcNAc...) asparagine glycosylation occurs at asparagine 408.

Belongs to the AB hydrolase superfamily. Lipase family. In terms of tissue distribution, detected in blood plasma. Produced and secreted by astrocytes (at protein level). Abundantly expressed in liver, brain and testis with highest levels in liver. In the brain, found in cerebellum, cerebral cortex, hippocampus and brain stem. Located to neurons and neuroglia.

It is found in the secreted. It catalyses the reaction a sterol + a 1,2-diacyl-sn-glycero-3-phosphocholine = a sterol ester + a 1-acyl-sn-glycero-3-phosphocholine. It carries out the reaction a 1-O-alkyl-2-acetyl-sn-glycero-3-phosphocholine + H2O = a 1-O-alkyl-sn-glycero-3-phosphocholine + acetate + H(+). The enzyme catalyses a 1-hexadecanoyl-2-acyl-sn-glycero-3-phosphocholine + (24S)-hydroxycholesterol = (24S)-24-hydroxycholesterol ester + 1-hexadecanoyl-sn-glycero-3-phosphocholine. The catalysed reaction is (24S)-hydroxycholesterol + 1-hexadecanoyl-2-(9Z,12Z-octadecadienoyl)-sn-glycero-3-phosphocholine = (24S)-hydroxycholesterol 3-linoleoate + 1-hexadecanoyl-sn-glycero-3-phosphocholine. It catalyses the reaction 1-hexadecanoyl-2-(5Z,8Z,11Z,14Z-eicosatetraenoyl)-sn-glycero-3-phosphocholine + cholesterol = cholesteryl (5Z,8Z,11Z,14Z)-eicosatetraenoate + 1-hexadecanoyl-sn-glycero-3-phosphocholine. It carries out the reaction 1-hexadecanoyl-2-(9Z-octadecenoyl)-sn-glycero-3-phosphocholine + cholesterol = cholesteryl (9Z-octadecenoate) + 1-hexadecanoyl-sn-glycero-3-phosphocholine. The enzyme catalyses 1-hexadecanoyl-2-(8Z,11Z,14Z-eicosatrienoyl)-sn-glycero-3-phosphocholine + cholesterol = cholesteryl (8Z,11Z,14Z)-eicosatrienoate + 1-hexadecanoyl-sn-glycero-3-phosphocholine. The catalysed reaction is 1-hexadecanoyl-2-(5Z,8Z,11Z-eicosatrienoyl)-sn-glycero-3-phosphocholine + cholesterol = cholesteryl (5Z,8Z,11Z)-eicosatrienoate + 1-hexadecanoyl-sn-glycero-3-phosphocholine. It catalyses the reaction 1-hexadecanoyl-2-(5Z,8Z,11Z,14Z,17Z-eicosapentaenoyl)-sn-glycero-3-phosphocholine + cholesterol = (5Z,8Z,11Z,14Z,17Z-eicosapentaenoyl)-cholesterol + 1-hexadecanoyl-sn-glycero-3-phosphocholine. It carries out the reaction 1-hexadecanoyl-2-(9Z,12Z-octadecadienoyl)-sn-glycero-3-phosphocholine + cholesterol = cholesteryl (9Z,12Z)-octadecadienoate + 1-hexadecanoyl-sn-glycero-3-phosphocholine. The enzyme catalyses 1-hexadecanoyl-2-(6Z,9Z,12Z-octadecatrienoyl)-sn-glycero-3-phosphocholine + cholesterol = (6Z,9Z,12Z-octadecatrienoyl)-cholesterol + 1-hexadecanoyl-sn-glycero-3-phosphocholine. The catalysed reaction is 1-hexadecanoyl-2-(11Z,14Z,17Z-eicosatrienoyl)-sn-glycero-3-phosphocholine + cholesterol = (11Z,14Z,17Z-eicosatrienoyl)-cholesterol + 1-hexadecanoyl-sn-glycero-3-phosphocholine. It catalyses the reaction 1-hexadecanoyl-2-(9Z,12Z,15Z-octadecatrienoyl)-sn-glycero-3-phosphocholine + cholesterol = (9Z,12Z,15Z-octadecatrienoyl)-cholesterol + 1-hexadecanoyl-sn-glycero-3-phosphocholine. It carries out the reaction 1-hexadecanoyl-2-(9Z,12Z-octadecadienoyl)-sn-glycero-3-phosphocholine + H2O = (9Z,12Z)-octadecadienoate + 1-hexadecanoyl-sn-glycero-3-phosphocholine + H(+). The enzyme catalyses 1-hexadecanoyl-2-(5Z,8Z,11Z,14Z-eicosatetraenoyl)-sn-glycero-3-phosphocholine + H2O = 1-hexadecanoyl-sn-glycero-3-phosphocholine + (5Z,8Z,11Z,14Z)-eicosatetraenoate + H(+). The catalysed reaction is a 1-O-alkyl-2-acetyl-sn-glycero-3-phosphocholine + 1-hexadecanoyl-sn-glycero-3-phosphocholine = 1-hexadecanoyl-2-acetyl-sn-glycero-3-phosphocholine + a 1-O-alkyl-sn-glycero-3-phosphocholine. With respect to regulation, APOA1 is the most potent activator in plasma. Also activated by APOE, APOC1 and APOA4. Central enzyme in the extracellular metabolism of plasma lipoproteins. Synthesized mainly in the liver and secreted into plasma where it converts cholesterol and phosphatidylcholines (lecithins) to cholesteryl esters and lysophosphatidylcholines on the surface of high and low density lipoproteins (HDLs and LDLs). The cholesterol ester is then transported back to the liver. Also produced in the brain by primary astrocytes, and esterifies free cholesterol on nascent APOE-containing lipoproteins secreted from glia and influences cerebral spinal fluid (CSF) APOE- and APOA1 levels. Together with APOE and the cholesterol transporter ABCA1, plays a key role in the maturation of glial-derived, nascent lipoproteins. Required for remodeling high-density lipoprotein particles into their spherical forms. Has a preference for plasma 16:0-18:2 or 18:O-18:2 phosphatidylcholines. Catalyzes the hydrolysis of 1-O-alkyl-2-acetyl-sn-glycero-3-phosphocholine (platelet-activating factor or PAF) to 1-O-alkyl-sn-glycero-3-phosphocholine (lyso-PAF). Also catalyzes the transfer of the acetate group from PAF to 1-hexadecanoyl-sn-glycero-3-phosphocholine forming lyso-PAF. Catalyzes the esterification of (24S)-hydroxycholesterol (24(S)OH-C), also known as cerebrosterol to produce 24(S)OH-C monoesters. The polypeptide is Phosphatidylcholine-sterol acyltransferase (Lcat) (Mus musculus (Mouse)).